A 352-amino-acid chain; its full sequence is C5a anaphylatoxin chemotactic receptor 1 (352 aa).

A compositionally biased stretch (polar residues) spans 1–11 (MDPISNDSSEI). Residues 1-20 (MDPISNDSSEITYDYSDGTP) form a disordered region. The Extracellular portion of the chain corresponds to 1–38 (MDPISNDSSEITYDYSDGTPNPDMPADGVYIPKMEPGD). N-linked (GlcNAc...) asparagine glycosylation is present at asparagine 6. A sulfotyrosine mark is found at tyrosine 13 and tyrosine 15. A helical membrane pass occupies residues 39-65 (IAALIIYLAVFLVGVTGNALVVWVTAF). Over 66 to 70 (EAKRT) the chain is Cytoplasmic. Residues 71 to 94 (VNAIWFLNLAVADLLSCLALPILF) form a helical membrane-spanning segment. The Extracellular portion of the chain corresponds to 95–111 (TSIVKHNHWPFGDQACI). Cysteine 110 and cysteine 189 are joined by a disulfide. The helical transmembrane segment at 112–133 (VLPSLILLNMYSSILLLATISA) threads the bilayer. Residues 134 to 154 (DRFLLVFKPIWCQKFRRPGLA) are Cytoplasmic-facing. The helical transmembrane segment at 155-175 (WMACGVTWVLALLLTIPSFVF) threads the bilayer. The Extracellular segment spans residues 176–202 (RRIHKDPYSDSILCNIDYSKGPFFIEK). The chain crosses the membrane as a helical span at residues 203–228 (AIAILRLMVGFVLPLLTLNICYTFLL). At 229-244 (IRTWSRKATRSTKTLK) the chain is on the cytoplasmic side. A helical transmembrane segment spans residues 245–267 (VVMAVVTCFFVFWLPYQVTGVIL). Residues 268–284 (AWLPRSSSTFQSVERLN) are Extracellular-facing. The helical transmembrane segment at 285–305 (SLCVSLAYINCCVNPIIYVMA) threads the bilayer. Residues 306-352 (GQGFHGRLRRSLPSIIRNVLSEDSLGRDSKSFTRSTMDTSTQKSQAV) lie on the Cytoplasmic side of the membrane. Phosphoserine occurs at positions 316, 319, 326, 329, 334, 336, and 340. The tract at residues 332 to 352 (RDSKSFTRSTMDTSTQKSQAV) is disordered. Positions 337–352 (FTRSTMDTSTQKSQAV) are enriched in polar residues.

This sequence belongs to the G-protein coupled receptor 1 family. As to quaternary structure, homodimer. May also form higher-order oligomers. Interacts (when phosphorylated) with ARRB1 and ARRB2; the interaction is associated with internalization of C5aR. Post-translationally, sulfation plays a critical role in the association of C5aR with C5a, but no significant role in the ability of the receptor to transduce a signal and mobilize calcium in response to a small peptide agonist. Phosphorylated on serine residues in response to C5a binding, resulting in internalization of the receptor and short-term desensitization to the ligand.

It is found in the cell membrane. The protein localises to the cytoplasmic vesicle. In terms of biological role, receptor for the chemotactic and inflammatory peptide anaphylatoxin C5a. The ligand interacts with at least two sites on the receptor: a high-affinity site on the extracellular N-terminus, and a second site in the transmembrane region which activates downstream signaling events. Receptor activation stimulates chemotaxis, granule enzyme release, intracellular calcium release and superoxide anion production. In Rattus norvegicus (Rat), this protein is C5a anaphylatoxin chemotactic receptor 1 (C5ar1).